A 130-amino-acid chain; its full sequence is L-ectoine synthase (130 aa).

The protein belongs to the ectoine synthase family.

It catalyses the reaction (2S)-4-acetamido-2-aminobutanoate = L-ectoine + H2O. The protein operates within amine and polyamine biosynthesis; ectoine biosynthesis; L-ectoine from L-aspartate 4-semialdehyde: step 3/3. In terms of biological role, catalyzes the circularization of gamma-N-acetyl-alpha,gamma-diaminobutyric acid (ADABA) to ectoine (1,4,5,6-tetrahydro-2-methyl-4-pyrimidine carboxylic acid), which is an excellent osmoprotectant. In Mycolicibacterium gilvum (strain PYR-GCK) (Mycobacterium gilvum (strain PYR-GCK)), this protein is L-ectoine synthase.